The following is a 165-amino-acid chain: Lymphocyte antigen 6K (165 aa).

Residues 1 to 17 (MALLALLLVVALPRVWT) form the signal peptide. N-linked (GlcNAc...) asparagine glycosylation occurs at Asn-20. The UPAR/Ly6 domain occupies 47–141 (ERENTFECQN…VFKEYAGSMG (95 aa)). Gly-138 carries the GPI-anchor amidated glycine lipid modification. Residues 139-165 (SMGESCGGLWLAILLLLASIAAGLSLS) constitute a propeptide, removed in mature form.

In terms of assembly, interacts with TEX101. Specifically expressed in testis (at protein level).

It localises to the secreted. It is found in the cytoplasm. The protein resides in the cell membrane. Its subcellular location is the cytoplasmic vesicle. The protein localises to the secretory vesicle. It localises to the acrosome. It is found in the membrane raft. In terms of biological role, required for sperm migration into the oviduct and male fertility by controlling binding of sperm to zona pellucida. May play a role in cell growth. The protein is Lymphocyte antigen 6K of Homo sapiens (Human).